The primary structure comprises 172 residues: Adenine phosphoribosyltransferase (172 aa).

The protein belongs to the purine/pyrimidine phosphoribosyltransferase family. In terms of assembly, homodimer.

It is found in the cytoplasm. The catalysed reaction is AMP + diphosphate = 5-phospho-alpha-D-ribose 1-diphosphate + adenine. It functions in the pathway purine metabolism; AMP biosynthesis via salvage pathway; AMP from adenine: step 1/1. Its function is as follows. Catalyzes a salvage reaction resulting in the formation of AMP, that is energically less costly than de novo synthesis. This is Adenine phosphoribosyltransferase from Exiguobacterium sibiricum (strain DSM 17290 / CCUG 55495 / CIP 109462 / JCM 13490 / 255-15).